We begin with the raw amino-acid sequence, 207 residues long: Transcriptional regulator YqjI (207 aa).

Residues 1–40 (MSHHHEGCCKHEGQPRHEGCCKGEKSEHEHCGHGHQHEHG) show a composition bias toward basic and acidic residues. A disordered region spans residues 1–46 (MSHHHEGCCKHEGQPRHEGCCKGEKSEHEHCGHGHQHEHGQCCGGR).

Oligomer (probable predominant form) and monomer.

Its activity is regulated as follows. Divalent metals such as nickel and iron have a similar negative effect on YqjI DNA-binding activity. In terms of biological role, represses the expression of YqjH which is involved in iron homeostasis under excess nickel conditions. Also represses its own expression. This is Transcriptional regulator YqjI (yqjI) from Escherichia coli (strain K12).